We begin with the raw amino-acid sequence, 186 residues long: dCTP deaminase (186 aa).

107–112 (KSTYAR) serves as a coordination point for dCTP. Glu133 serves as the catalytic Proton donor/acceptor. Positions 152, 166, and 176 each coordinate dCTP.

It belongs to the dCTP deaminase family. Homotrimer.

It carries out the reaction dCTP + H2O + H(+) = dUTP + NH4(+). The protein operates within pyrimidine metabolism; dUMP biosynthesis; dUMP from dCTP (dUTP route): step 1/2. Functionally, catalyzes the deamination of dCTP to dUTP. The chain is dCTP deaminase from Campylobacter concisus (strain 13826).